Consider the following 321-residue polypeptide: ATP-dependent 6-phosphofructokinase (321 aa).

An ATP-binding site is contributed by Gly11. 21–25 lines the ADP pocket; it reads RAVVR. ATP-binding positions include 72-73 and 102-105; these read RC and GDGS. Position 103 (Asp103) interacts with Mg(2+). Residue 126–128 coordinates substrate; it reads TID. Catalysis depends on Asp128, which acts as the Proton acceptor. Arg155 contributes to the ADP binding site. Substrate-binding positions include Arg163 and 170–172; that span reads MGR. Residues 186-188, Arg212, and 214-216 contribute to the ADP site; these read GAE and KLH. Residues Glu223, Arg245, and 251 to 254 each bind substrate; that span reads HIQR.

It belongs to the phosphofructokinase type A (PFKA) family. ATP-dependent PFK group I subfamily. Prokaryotic clade 'B1' sub-subfamily. In terms of assembly, homotetramer. Requires Mg(2+) as cofactor.

Its subcellular location is the cytoplasm. The enzyme catalyses beta-D-fructose 6-phosphate + ATP = beta-D-fructose 1,6-bisphosphate + ADP + H(+). The protein operates within carbohydrate degradation; glycolysis; D-glyceraldehyde 3-phosphate and glycerone phosphate from D-glucose: step 3/4. With respect to regulation, allosterically activated by ADP and other diphosphonucleosides, and allosterically inhibited by phosphoenolpyruvate. Its function is as follows. Catalyzes the phosphorylation of D-fructose 6-phosphate to fructose 1,6-bisphosphate by ATP, the first committing step of glycolysis. In Caldanaerobacter subterraneus subsp. tengcongensis (strain DSM 15242 / JCM 11007 / NBRC 100824 / MB4) (Thermoanaerobacter tengcongensis), this protein is ATP-dependent 6-phosphofructokinase.